The primary structure comprises 307 residues: Transaldolase (307 aa).

Lysine 125 (schiff-base intermediate with substrate) is an active-site residue.

The protein belongs to the transaldolase family. Type 1 subfamily. In terms of assembly, homodimer.

The protein resides in the cytoplasm. The enzyme catalyses D-sedoheptulose 7-phosphate + D-glyceraldehyde 3-phosphate = D-erythrose 4-phosphate + beta-D-fructose 6-phosphate. Its pathway is carbohydrate degradation; pentose phosphate pathway; D-glyceraldehyde 3-phosphate and beta-D-fructose 6-phosphate from D-ribose 5-phosphate and D-xylulose 5-phosphate (non-oxidative stage): step 2/3. In terms of biological role, transaldolase is important for the balance of metabolites in the pentose-phosphate pathway. This chain is Transaldolase, found in Pseudomonas paraeruginosa (strain DSM 24068 / PA7) (Pseudomonas aeruginosa (strain PA7)).